The following is a 338-amino-acid chain: MVDHEGEDSSPADGFGHIPVLLHRADELLGPALTANDPHGGGAVMIDATLGLGGHSEHFLRTYPQLRLVALDRDPHALEIAGGRLAPFADRITFVHTRYDGIEDALTQAGLSPRESVHGILFDLGVSSMQLDESDRGFAYSIDAPLDMRMDPTTGITAAEVLNTYSHGDLARILSTYGEERFAGKIASEVVRQRAKEPFTTSAALVELLYRTIPAATRRTGGHPAKRTFQALRVEVNGELDSLRAAVPAALDALTVGGRVVFMSYQSLEDRVVKQEITPRSKSKSPEGLPVELPGMGPEFRILTRGAERASEQEIEENPRSAPVRLRAAERIARRSAA.

S-adenosyl-L-methionine contacts are provided by residues Gly-53–His-55, Asp-72, Tyr-99, Asp-123, and Gln-130. A disordered region spans residues Ile-277 to Pro-298.

It belongs to the methyltransferase superfamily. RsmH family.

It localises to the cytoplasm. The catalysed reaction is cytidine(1402) in 16S rRNA + S-adenosyl-L-methionine = N(4)-methylcytidine(1402) in 16S rRNA + S-adenosyl-L-homocysteine + H(+). Its function is as follows. Specifically methylates the N4 position of cytidine in position 1402 (C1402) of 16S rRNA. This chain is Ribosomal RNA small subunit methyltransferase H, found in Rhodococcus opacus (strain B4).